Consider the following 339-residue polypeptide: MASDTEWVLESVLGFVSGPVWTVPVLEFMEQKCSVFDDEEENKLSYTEIHNEYKELVETLLTQHLNEVGISEEQFQEACTAPLAHSATLKTILQPVLAVEDFKIFKAMMVQKNIELQLQAIRIIQERNGVLPDCLQHGRDIISDLEQQEMKLVSEALRLSKEEYEREQLRRSAKELNLTLGEHSENKQSSGSERTPNNTELPVKTQKEEKQPVNMLESPYKEVSIKLKEMSNTEAAEAWLEQARKEAGILSSVTNLSQAEKEQLQKRAEYLRRRREELLAKKQESKKMAQNSEEHEEKATCSKQEMTEEEKKSLQRRKRLAEKLKEEVILSCEKSGSAS.

2 coiled-coil regions span residues 142–188 (ISDL…ENKQ) and 255–330 (NLSQ…EVIL). 2 disordered regions span residues 177-212 (NLTLGEHSENKQSSGSERTPNNTELPVKTQKEEKQP) and 281-318 (KKQESKKMAQNSEEHEEKATCSKQEMTEEEKKSLQRRK). Over residues 187 to 200 (KQSSGSERTPNNTE) the composition is skewed to polar residues. Over residues 281 to 313 (KKQESKKMAQNSEEHEEKATCSKQEMTEEEKKS) the composition is skewed to basic and acidic residues.

The protein belongs to the CFAP36 family.

The protein localises to the nucleus. It is found in the cytoplasm. Its subcellular location is the cell projection. The protein resides in the cilium. It localises to the flagellum. This is Cilia- and flagella-associated protein 36 from Xenopus tropicalis (Western clawed frog).